The primary structure comprises 644 residues: 1,4-alpha-glucan branching enzyme GlgB (644 aa).

Asp309 serves as the catalytic Nucleophile. The active-site Proton donor is Glu362.

It belongs to the glycosyl hydrolase 13 family. GlgB subfamily. Monomer.

The enzyme catalyses Transfers a segment of a (1-&gt;4)-alpha-D-glucan chain to a primary hydroxy group in a similar glucan chain.. Its pathway is glycan biosynthesis; glycogen biosynthesis. Its function is as follows. Catalyzes the formation of the alpha-1,6-glucosidic linkages in glycogen by scission of a 1,4-alpha-linked oligosaccharide from growing alpha-1,4-glucan chains and the subsequent attachment of the oligosaccharide to the alpha-1,6 position. The protein is 1,4-alpha-glucan branching enzyme GlgB of Cutibacterium acnes (strain DSM 16379 / KPA171202) (Propionibacterium acnes).